The following is a 69-amino-acid chain: Conotoxin Lp3.1 (69 aa).

A signal peptide spans 1–20 (MLKMGVLLFIFLVLFPLTTL). Residues 21–54 (ELDTDRPVERHAAIKQDLKPQERRGIRLHAPRDE) constitute a propeptide that is removed on maturation. Disulfide bonds link cysteine 55-cysteine 67, cysteine 56-cysteine 65, and cysteine 61-cysteine 68.

Belongs to the conotoxin M superfamily. Expressed by the venom duct.

The protein localises to the secreted. The protein is Conotoxin Lp3.1 of Conus leopardus (Leopard cone).